We begin with the raw amino-acid sequence, 145 residues long: Histone H2B (145 aa).

A disordered region spans residues 1 to 52 (MAPKAAAGKKPAEKKPVEEKKAEEVPAEKKPKAGKKLPKDAGRPDKKKKRAK). Residues K9, K35, and K36 each carry the N6-acetyllysine modification. The span at 10–44 (KPAEKKPVEEKKAEEVPAEKKPKAGKKLPKDAGRP) shows a compositional bias: basic and acidic residues. K141 is covalently cross-linked (Glycyl lysine isopeptide (Lys-Gly) (interchain with G-Cter in ubiquitin)).

This sequence belongs to the histone H2B family. The nucleosome is a histone octamer containing two molecules each of H2A, H2B, H3 and H4 assembled in one H3-H4 heterotetramer and two H2A-H2B heterodimers. The octamer wraps approximately 147 bp of DNA. Post-translationally, can be acetylated to form H2BK6ac, H2BK33ac and H2BK34ac. In terms of processing, monoubiquitinated to form H2BK143ub1; may give a specific tag for epigenetic transcriptional activation. As to expression, in anthers, floral buds, pollen, petals and fruits.

It is found in the nucleus. It localises to the chromosome. Its function is as follows. Core component of nucleosome. Nucleosomes wrap and compact DNA into chromatin, limiting DNA accessibility to the cellular machineries which require DNA as a template. Histones thereby play a central role in transcription regulation, DNA repair, DNA replication and chromosomal stability. DNA accessibility is regulated via a complex set of post-translational modifications of histones, also called histone code, and nucleosome remodeling. The sequence is that of Histone H2B (HIS2B) from Capsicum annuum (Capsicum pepper).